The chain runs to 270 residues: Nodule lectin (270 aa).

An N-terminal signal peptide occupies residues 1-33; the sequence is MAFYRTNLPTRELFSLVSVVIVLLATNINSVQA. The propeptide occupies 34 to 41; sequence LSFNFTKL. An N-linked (GlcNAc...) asparagine glycan is attached at N134.

It belongs to the leguminous lectin family. Glycosylated in a boron-dependent manner. Glycosylation is required for localization to symbiosomes. 3 different glycosylation variants, NLEC-1A, NLEC-1B and NLEC-1C, have been identified. Expressed in nodules of Rhizobium-infected and uninfected roots and in the root stele near the nodule attachment point. In roots which have been colonized by the endomycorrhizal fungus G.versiforme, detected only in cortical cells colonized by the fungus, mainly those containing arbuscules.

Its subcellular location is the symbiosome. The protein localises to the peribacteroid space. The protein resides in the peribacteroid membrane. Functionally, involved in symbiosome development. The polypeptide is Nodule lectin (NLEC1) (Pisum sativum (Garden pea)).